A 103-amino-acid polypeptide reads, in one-letter code: Large ribosomal subunit protein bL21 (103 aa).

This sequence belongs to the bacterial ribosomal protein bL21 family. Part of the 50S ribosomal subunit. Contacts protein L20.

This protein binds to 23S rRNA in the presence of protein L20. The chain is Large ribosomal subunit protein bL21 from Haemophilus influenzae (strain PittEE).